Reading from the N-terminus, the 479-residue chain is Ribulose bisphosphate carboxylase large chain 2 (479 aa).

Substrate is bound by residues N116 and T166. Catalysis depends on K168, which acts as the Proton acceptor. K170 is a binding site for substrate. Residues K194, D196, and E197 each contribute to the Mg(2+) site. K194 bears the N6-carboxylysine mark. H287 serves as the catalytic Proton acceptor. Positions 288, 320, and 372 each coordinate substrate.

It belongs to the RuBisCO large chain family. Type I subfamily. Heterohexadecamer of 8 large chains and 8 small chains. Requires Mg(2+) as cofactor.

The catalysed reaction is 2 (2R)-3-phosphoglycerate + 2 H(+) = D-ribulose 1,5-bisphosphate + CO2 + H2O. It catalyses the reaction D-ribulose 1,5-bisphosphate + O2 = 2-phosphoglycolate + (2R)-3-phosphoglycerate + 2 H(+). In terms of biological role, ruBisCO catalyzes two reactions: the carboxylation of D-ribulose 1,5-bisphosphate, the primary event in carbon dioxide fixation, as well as the oxidative fragmentation of the pentose substrate. Both reactions occur simultaneously and in competition at the same active site. This chain is Ribulose bisphosphate carboxylase large chain 2, found in Bradyrhizobium sp. (strain ORS 278).